The following is a 610-amino-acid chain: Zinc metalloproteinase-disintegrin-like halysase (610 aa).

The N-terminal stretch at 1–20 (MIQVLLVTICLAVFPYQGSS) is a signal peptide. Positions 21–182 (IILESGNVND…WESYEPIKKA (162 aa)) are excised as a propeptide. The region spanning 199–395 (KYVKLVMVAD…DMPQCILKKP (197 aa)) is the Peptidase M12B domain. N-linked (GlcNAc...) asparagine glycosylation occurs at Asn218. Cystine bridges form between Cys310–Cys390, Cys350–Cys374, and Cys352–Cys357. His335 lines the Zn(2+) pocket. Residue Glu336 is part of the active site. Zn(2+) contacts are provided by His339 and His345. Positions 403-488 (PPVCGNYFVE…AECTDRFQRN (86 aa)) constitute a Disintegrin domain. Positions 405, 408, 410, 412, 415, and 418 each coordinate Ca(2+). Disulfide bonds link Cys406-Cys435, Cys417-Cys430, Cys419-Cys425, Cys429-Cys452, Cys443-Cys449, Cys448-Cys474, Cys461-Cys481, Cys468-Cys499, Cys492-Cys504, Cys511-Cys561, Cys526-Cys572, Cys539-Cys549, Cys556-Cys598, and Cys592-Cys603. A D/ECD-tripeptide motif is present at residues 467 to 469 (ECD).

It belongs to the venom metalloproteinase (M12B) family. P-III subfamily. P-IIIa sub-subfamily. As to quaternary structure, monomer. Requires Zn(2+) as cofactor. Expressed by the venom gland.

The protein localises to the secreted. With respect to regulation, inhibited by EDTA and EGTA. Not inhibited by PMSF, antipain, pepstatin, and iodoacetamide. Strongly inhibits the collagen-induced human platelet aggregation (inhibition of alpha-2/beta-1 (ITGA2/ITGB1) integrin). Hydrolyzes the Aalpha-chain of fibrinogen, without cleavage of Bbeta- and gamma-chains. Degrades type IV collagen (but not types I, II and V), fibronectin and vitronectin and also integrins alpha-1/beta-1 (ITGA1/ITGB1) and alpha-5/beta/1 (ITGA5/ITGB1) (but not alpha-V/beta-3 (ITGAV/ITGB3) and alpha-V/beta-5 (ITGAV/ITGB5) integrins). Both metalloproteinase (peptidase M12B) and disintegrin-like domains (recombinantly expressed and named halydin) play characteristic roles to inhibit human platelet aggregation. Induces apoptosis and strongly inhibits proliferation of endothelial cells as well as adhesion of the cells to extracellular matrix proteins. The apoptosis is closely associated with activation of caspase-3 and decreased level of Bcl-X(L)/Bax. Apohalysase, which lacks metalloprotease activity, is also able to induce the apoptosis. Cleaves insulin B chain at '34-His-|-Leu-35', '37-Glu-|-Ala-38', '38-Ala-|-Leu-39', '39-Leu-|-Tyr-40', '40-Tyr-|-Leu-41', '47-Gly-|-Phe-48' and '48-Phe-|-Phe-49' bonds. In Gloydius halys (Chinese water mocassin), this protein is Zinc metalloproteinase-disintegrin-like halysase.